Reading from the N-terminus, the 429-residue chain is Serine--tRNA ligase (429 aa).

L-serine is bound at residue 235-237 (TAE). ATP is bound at residue 266 to 268 (RSE). Residue E289 participates in L-serine binding. An ATP-binding site is contributed by 353-356 (EISS). Residue S389 participates in L-serine binding.

It belongs to the class-II aminoacyl-tRNA synthetase family. Type-1 seryl-tRNA synthetase subfamily. Homodimer. The tRNA molecule binds across the dimer.

Its subcellular location is the cytoplasm. It carries out the reaction tRNA(Ser) + L-serine + ATP = L-seryl-tRNA(Ser) + AMP + diphosphate + H(+). It catalyses the reaction tRNA(Sec) + L-serine + ATP = L-seryl-tRNA(Sec) + AMP + diphosphate + H(+). It participates in aminoacyl-tRNA biosynthesis; selenocysteinyl-tRNA(Sec) biosynthesis; L-seryl-tRNA(Sec) from L-serine and tRNA(Sec): step 1/1. Its function is as follows. Catalyzes the attachment of serine to tRNA(Ser). Is also able to aminoacylate tRNA(Sec) with serine, to form the misacylated tRNA L-seryl-tRNA(Sec), which will be further converted into selenocysteinyl-tRNA(Sec). In Haemophilus influenzae (strain 86-028NP), this protein is Serine--tRNA ligase.